The sequence spans 55 residues: Large ribosomal subunit protein bL33 (55 aa).

This sequence belongs to the bacterial ribosomal protein bL33 family.

This chain is Large ribosomal subunit protein bL33, found in Pseudarthrobacter chlorophenolicus (strain ATCC 700700 / DSM 12829 / CIP 107037 / JCM 12360 / KCTC 9906 / NCIMB 13794 / A6) (Arthrobacter chlorophenolicus).